The following is a 462-amino-acid chain: Annexin A7 (462 aa).

The segment at 1–130 (MSYPPNQGYP…QGYPPQQGYP (130 aa)) is disordered. Positions 7-131 (QGYPPQSNSP…GYPPQQGYPP (125 aa)) are 19 X 6 AA tandem repeats of Q-G-Y-P-P-Q. The span at 16 to 130 (PQPGQYGAPQ…QGYPPQQGYP (115 aa)) shows a compositional bias: low complexity. 4 Annexin repeats span residues 161–232 (HDCK…ALLT), 233–304 (EPAH…KLTE), 315–388 (MQVS…AIVT), and 392–462 (NPYG…DIIS).

The protein belongs to the annexin family.

Calcium/phospholipid-binding protein which promotes membrane fusion and is involved in exocytosis. In Dictyostelium discoideum (Social amoeba), this protein is Annexin A7 (nxnA).